A 305-amino-acid chain; its full sequence is MRLVFAGTPLAAVPSLQRLAASGHEVALVVTRADAPLGRKRVLTPSPVAAEAERLGIPTLRVNRLDDDATARIAAVGAELGVIVAYGGLVREPLLSTPARGWINLHFSLLPRWRGAAPVQRSIMAGERVTGASVFQLERGMDTGPVFSMEERPTGDHETAGHVLDALAVQGADLLARTVDAIGAGTAVARPQEGEPTLAPKTTIDDGRVDWARSADEVLARIRGVTPEPGAHTSVDDVRLKIHRAAALRDAAPLEPGRIAALDGRVAIGTASHPVELIQVQPAGKSPMPAADWWRGVTTKDVIAR.

108-111 (SLLP) contacts (6S)-5,6,7,8-tetrahydrofolate.

It belongs to the Fmt family.

It catalyses the reaction L-methionyl-tRNA(fMet) + (6R)-10-formyltetrahydrofolate = N-formyl-L-methionyl-tRNA(fMet) + (6S)-5,6,7,8-tetrahydrofolate + H(+). Functionally, attaches a formyl group to the free amino group of methionyl-tRNA(fMet). The formyl group appears to play a dual role in the initiator identity of N-formylmethionyl-tRNA by promoting its recognition by IF2 and preventing the misappropriation of this tRNA by the elongation apparatus. The protein is Methionyl-tRNA formyltransferase of Clavibacter sepedonicus (Clavibacter michiganensis subsp. sepedonicus).